The following is a 134-amino-acid chain: MKAFSPVRSVRKNSLSDHSLGISRSKTPVDDPMSLLYNMNDCYSKLKELVPSIPQNKKVTKMEILQHVIDYILDLQIALDSHPTIVSLHHQRPGQNQASRTPLTTLNTDISILSLQASEFPSELMSNDSKVLCG.

2 positions are modified to phosphoserine: Ser-14 and Ser-25. The region spanning Ser-23–Leu-75 is the bHLH domain. The interval Asp-30–Pro-83 is interaction with IFI204. The Nuclear export signal motif lies at Leu-106–Leu-115.

As to quaternary structure, interacts with GATA4 and NKX2-5. Interacts with NR0B2. Interacts with CLOCK and BMAL1. Interacts with IFI204. Interacts with NEDD9/HEF1. Interacts with ASB4; this interaction promotes ID2 proteasomal degradation. Post-translationally, polyubiquitinated; which is favored by Ifi204 and leads to proteasomal degradation. Ubiquitinated in a ASB4-depedent manner, leading to proteasomal degradation. Phosphorylated in vitro by CDK1, PKA and PKC.

Its subcellular location is the cytoplasm. It localises to the nucleus. Transcriptional regulator (lacking a basic DNA binding domain) which negatively regulates the basic helix-loop-helix (bHLH) transcription factors by forming heterodimers and inhibiting their DNA binding and transcriptional activity. Implicated in regulating a variety of cellular processes, including cellular growth, senescence, differentiation, apoptosis, angiogenesis, and neoplastic transformation. Inhibits skeletal muscle and cardiac myocyte differentiation. Regulates the circadian clock by repressing the transcriptional activator activity of the CLOCK-BMAL1 heterodimer. Restricts the CLOCK and BMAL1 localization to the cytoplasm. Plays a role in both the input and output pathways of the circadian clock: in the input component, is involved in modulating the magnitude of photic entrainment and in the output component, contributes to the regulation of a variety of liver clock-controlled genes involved in lipid metabolism. This is DNA-binding protein inhibitor ID-2 (Id2) from Mus musculus (Mouse).